Consider the following 459-residue polypeptide: tRNA modification GTPase MnmE (459 aa).

R22, E85, and R124 together coordinate (6S)-5-formyl-5,6,7,8-tetrahydrofolate. Residues 221–380 form the TrmE-type G domain; that stretch reads GLSTVIVGKP…LEIQIRDLFF (160 aa). A K(+)-binding site is contributed by N231. GTP contacts are provided by residues 231–236, 250–256, and 275–278; these read NVGKSS, TEVAGTT, and DTAG. Mg(2+) is bound at residue S235. The K(+) site is built by T250, V252, and T255. T256 is a Mg(2+) binding site. K459 contributes to the (6S)-5-formyl-5,6,7,8-tetrahydrofolate binding site.

The protein belongs to the TRAFAC class TrmE-Era-EngA-EngB-Septin-like GTPase superfamily. TrmE GTPase family. In terms of assembly, homodimer. Heterotetramer of two MnmE and two MnmG subunits. K(+) is required as a cofactor.

The protein localises to the cytoplasm. Functionally, exhibits a very high intrinsic GTPase hydrolysis rate. Involved in the addition of a carboxymethylaminomethyl (cmnm) group at the wobble position (U34) of certain tRNAs, forming tRNA-cmnm(5)s(2)U34. The chain is tRNA modification GTPase MnmE from Staphylococcus aureus (strain MW2).